The following is a 325-amino-acid chain: DNA repair and recombination protein RadA (325 aa).

107 to 114 (GEFGSGKT) is a binding site for ATP.

The protein belongs to the eukaryotic RecA-like protein family.

Involved in DNA repair and in homologous recombination. Binds and assemble on single-stranded DNA to form a nucleoprotein filament. Hydrolyzes ATP in a ssDNA-dependent manner and promotes DNA strand exchange between homologous DNA molecules. In Methanococcoides burtonii (strain DSM 6242 / NBRC 107633 / OCM 468 / ACE-M), this protein is DNA repair and recombination protein RadA.